A 229-amino-acid chain; its full sequence is 2,3-bisphosphoglycerate-dependent phosphoglycerate mutase (229 aa).

Substrate is bound by residues 7–14, 20–21, arginine 59, 86–89, lysine 97, 113–114, and 182–183; these read RHGQSEWN, TG, ERHY, RR, and GN. The Tele-phosphohistidine intermediate role is filled by histidine 8. Residue glutamate 86 is the Proton donor/acceptor of the active site.

Belongs to the phosphoglycerate mutase family. BPG-dependent PGAM subfamily.

The enzyme catalyses (2R)-2-phosphoglycerate = (2R)-3-phosphoglycerate. Its pathway is carbohydrate degradation; glycolysis; pyruvate from D-glyceraldehyde 3-phosphate: step 3/5. Its function is as follows. Catalyzes the interconversion of 2-phosphoglycerate and 3-phosphoglycerate. This Listeria monocytogenes serotype 4a (strain HCC23) protein is 2,3-bisphosphoglycerate-dependent phosphoglycerate mutase.